The sequence spans 1164 residues: Auxin response factor 7 (1164 aa).

The segment at residues 127–229 is a DNA-binding region (TF-B3); the sequence is FCKTLTASDT…QLLLGIRRAN (103 aa). Disordered stretches follow at residues 451 to 505, 536 to 555, 570 to 728, 765 to 858, and 903 to 930; these read HNNL…QQQL, QQLQ…QQQQ, HQQP…LLQQ, FLSP…SSSG, and KSKA…GENN. The segment covering 464 to 489 has biased composition (polar residues); it reads LSFQTPHGGISSSNLQFNKQNQQAPM. Over residues 570–635 the composition is skewed to low complexity; that stretch reads HQQPLQQQTQ…SQQASTHHLQ (66 aa). Over residues 637-651 the composition is skewed to polar residues; the sequence is QLVSGSMASSVITPP. Low complexity predominate over residues 652–671; sequence SSSLNQSFQQQQQQSKQLQQ. Polar residues predominate over residues 678–710; it reads ASTSQSSVIETSKSSSNLMSAPPQETQFSRQVE. Low complexity-rich tracts occupy residues 711–728 and 765–790; these read QQQP…LLQQ and FLSP…TLSQ. A compositionally biased stretch (polar residues) spans 791-808; it reads GHQFPSSCTNNGLSTLQP. The span at 841–851 shows a compositional bias: low complexity; sequence PSSSTSPSTNN. The segment covering 903 to 921 has biased composition (polar residues); the sequence is KSKASLTDHQLEASASGTS. The 94-residue stretch at 1037–1130 folds into the PB1 domain; sequence RTYTKVQKRG…EVQQMSLDGN (94 aa). A disordered region spans residues 1145 to 1164; it reads DSGNAWRGHYDDNSATSFNR.

This sequence belongs to the ARF family. Homodimers and heterodimers. Interacts with the auxin-responsive proteins IAA1 and IAA12 (BODENLOS). Interacts (via PB1 domain) with IAA17 (via PB1 domain). Interacts with IAA19. Interacts with ARF5. Binds to JMJ30. Binds to ATXR2 in the nucleus. Expressed in the whole plant.

The protein localises to the nucleus. Auxin response factors (ARFs) are transcriptional factors that bind specifically to the DNA sequence 5'-TGTCTC-3' found in the auxin-responsive promoter elements (AuxREs). Acts as a transcriptional activator of several tropic stimulus-induced (TSI) genes, including SAUR50. Formation of heterodimers with Aux/IAA proteins may alter their ability to modulate early auxin response genes expression. Required for differential growth responses of aerial tissues. Involved in ethylene responses. Regulates lateral root formation through direct regulation of LBD16 and/or LBD29. Functionally redundant with ARF19. Mediates embryo axis formation and vascular tissues differentiation. Functionally redundant with ARF5. Involved in cellular dedifferentiation during callus formation on callus-inducing medium (CIM) and in an ATXR2-dependent manner. This chain is Auxin response factor 7, found in Arabidopsis thaliana (Mouse-ear cress).